Here is a 224-residue protein sequence, read N- to C-terminus: UPF0758 protein RSc2444 (224 aa).

An MPN domain is found at 102–224 (TLESPQSVKD…VYSFLEHGKM (123 aa)). 3 residues coordinate Zn(2+): His173, His175, and Asp186. The JAMM motif motif lies at 173 to 186 (HNHPTGHVEPSESD).

The protein belongs to the UPF0758 family.

This Ralstonia nicotianae (strain ATCC BAA-1114 / GMI1000) (Ralstonia solanacearum) protein is UPF0758 protein RSc2444.